The following is a 279-amino-acid chain: Shikimate dehydrogenase (NADP(+)) (279 aa).

Residues 20–22 (SRS) and threonine 67 each bind shikimate. Catalysis depends on lysine 71, which acts as the Proton acceptor. Aspartate 83 is a binding site for NADP(+). Shikimate contacts are provided by asparagine 92 and aspartate 108. NADP(+) contacts are provided by residues 134–138 (GAGGA) and leucine 223. Position 225 (tyrosine 225) interacts with shikimate. Glycine 246 serves as a coordination point for NADP(+).

This sequence belongs to the shikimate dehydrogenase family. In terms of assembly, homodimer.

The catalysed reaction is shikimate + NADP(+) = 3-dehydroshikimate + NADPH + H(+). It functions in the pathway metabolic intermediate biosynthesis; chorismate biosynthesis; chorismate from D-erythrose 4-phosphate and phosphoenolpyruvate: step 4/7. Its function is as follows. Involved in the biosynthesis of the chorismate, which leads to the biosynthesis of aromatic amino acids. Catalyzes the reversible NADPH linked reduction of 3-dehydroshikimate (DHSA) to yield shikimate (SA). The protein is Shikimate dehydrogenase (NADP(+)) of Cereibacter sphaeroides (strain ATCC 17029 / ATH 2.4.9) (Rhodobacter sphaeroides).